We begin with the raw amino-acid sequence, 158 residues long: Small ribosomal subunit protein uS7 (158 aa).

The protein belongs to the universal ribosomal protein uS7 family. As to quaternary structure, part of the 30S ribosomal subunit. Contacts proteins S9 and S11.

One of the primary rRNA binding proteins, it binds directly to 16S rRNA where it nucleates assembly of the head domain of the 30S subunit. Is located at the subunit interface close to the decoding center, probably blocks exit of the E-site tRNA. The sequence is that of Small ribosomal subunit protein uS7 from Phocaeicola vulgatus (strain ATCC 8482 / DSM 1447 / JCM 5826 / CCUG 4940 / NBRC 14291 / NCTC 11154) (Bacteroides vulgatus).